Consider the following 86-residue polypeptide: MSLLDYFKTKKKPSTAATAKERLQIIVAHQRGERDAPDYFPQMKQEIIEVIRKYVKVGADQVSVQLDQNDDNLSVLELNVTLPEQS.

The protein belongs to the MinE family.

Its function is as follows. Prevents the cell division inhibition by proteins MinC and MinD at internal division sites while permitting inhibition at polar sites. This ensures cell division at the proper site by restricting the formation of a division septum at the midpoint of the long axis of the cell. This is Cell division topological specificity factor from Shewanella piezotolerans (strain WP3 / JCM 13877).